Consider the following 168-residue polypeptide: MRIGTGYDLHRLVKGRRLVLGGVALPFEKGLDGHSDADVLVHAVCDALLGAAGLGDIGDHFPDTDARFKGVSSLLLLTETGRMLKEKGFFVVNIDATVLAQAPKLGAHKAAMAANMATALGIDAACVNVKATTTEGLDAVGRGEAMAAMSVALIIEEEARDSRGQGAG.

2 residues coordinate a divalent metal cation: D8 and H10. Residues 8-10 (DLH) and 34-35 (HS) contribute to the 4-CDP-2-C-methyl-D-erythritol 2-phosphate site. H42 serves as a coordination point for a divalent metal cation. 4-CDP-2-C-methyl-D-erythritol 2-phosphate contacts are provided by residues 56–58 (DIG), 61–65 (FPDTD), 132–135 (TTTE), and R142.

This sequence belongs to the IspF family. In terms of assembly, homotrimer. It depends on a divalent metal cation as a cofactor.

The enzyme catalyses 4-CDP-2-C-methyl-D-erythritol 2-phosphate = 2-C-methyl-D-erythritol 2,4-cyclic diphosphate + CMP. It functions in the pathway isoprenoid biosynthesis; isopentenyl diphosphate biosynthesis via DXP pathway; isopentenyl diphosphate from 1-deoxy-D-xylulose 5-phosphate: step 4/6. In terms of biological role, involved in the biosynthesis of isopentenyl diphosphate (IPP) and dimethylallyl diphosphate (DMAPP), two major building blocks of isoprenoid compounds. Catalyzes the conversion of 4-diphosphocytidyl-2-C-methyl-D-erythritol 2-phosphate (CDP-ME2P) to 2-C-methyl-D-erythritol 2,4-cyclodiphosphate (ME-CPP) with a corresponding release of cytidine 5-monophosphate (CMP). In Desulfosudis oleivorans (strain DSM 6200 / JCM 39069 / Hxd3) (Desulfococcus oleovorans), this protein is 2-C-methyl-D-erythritol 2,4-cyclodiphosphate synthase.